The sequence spans 338 residues: Heat-inducible transcription repressor HrcA (338 aa).

It belongs to the HrcA family.

Functionally, negative regulator of class I heat shock genes (grpE-dnaK-dnaJ and groELS operons). Prevents heat-shock induction of these operons. This Thermotoga maritima (strain ATCC 43589 / DSM 3109 / JCM 10099 / NBRC 100826 / MSB8) protein is Heat-inducible transcription repressor HrcA.